The chain runs to 122 residues: Small ribosomal subunit protein uS13 (122 aa).

The interval 95 to 122 is disordered; sequence GLPVRGQRTKTNSRTRKGRRKTVANKKK. Residues 101–122 are compositionally biased toward basic residues; it reads QRTKTNSRTRKGRRKTVANKKK.

This sequence belongs to the universal ribosomal protein uS13 family. Part of the 30S ribosomal subunit. Forms a loose heterodimer with protein S19. Forms two bridges to the 50S subunit in the 70S ribosome.

Its function is as follows. Located at the top of the head of the 30S subunit, it contacts several helices of the 16S rRNA. In the 70S ribosome it contacts the 23S rRNA (bridge B1a) and protein L5 of the 50S subunit (bridge B1b), connecting the 2 subunits; these bridges are implicated in subunit movement. Contacts the tRNAs in the A and P-sites. This is Small ribosomal subunit protein uS13 from Protochlamydia amoebophila (strain UWE25).